The following is a 270-amino-acid chain: Phosphatidylglycerol--prolipoprotein diacylglyceryl transferase (270 aa).

4 helical membrane-spanning segments follow: residues 19 to 39, 54 to 74, 92 to 112, and 116 to 136; these read FPVYWYGVIIGTGVLLGLWLA, IDLVLIAVPIAILFARMYYVI, QGGLAIHGGLIGAVITGILFA, and GLSFWKLADIAAPSILLGQAI. Arg-138 is a binding site for a 1,2-diacyl-sn-glycero-3-phospho-(1'-sn-glycerol). 3 consecutive transmembrane segments (helical) span residues 178–198, 206–226, and 236–256; these read HPTFLYESLWNFAGVILLLAL, GELFFTYLIWYSVGRFFVEGL, and LRIAQVMSIGIVVISIIFIIV.

It belongs to the Lgt family.

The protein resides in the cell membrane. The catalysed reaction is L-cysteinyl-[prolipoprotein] + a 1,2-diacyl-sn-glycero-3-phospho-(1'-sn-glycerol) = an S-1,2-diacyl-sn-glyceryl-L-cysteinyl-[prolipoprotein] + sn-glycerol 1-phosphate + H(+). The protein operates within protein modification; lipoprotein biosynthesis (diacylglyceryl transfer). In terms of biological role, catalyzes the transfer of the diacylglyceryl group from phosphatidylglycerol to the sulfhydryl group of the N-terminal cysteine of a prolipoprotein, the first step in the formation of mature lipoproteins. The sequence is that of Phosphatidylglycerol--prolipoprotein diacylglyceryl transferase from Bacillus mycoides (strain KBAB4) (Bacillus weihenstephanensis).